We begin with the raw amino-acid sequence, 52 residues long: Ribosome biogenesis protein Nop10 (52 aa).

This sequence belongs to the NOP10 family.

In terms of biological role, involved in ribosome biogenesis; more specifically in 18S rRNA pseudouridylation and in cleavage of pre-rRNA. This chain is Ribosome biogenesis protein Nop10, found in Methanococcus vannielii (strain ATCC 35089 / DSM 1224 / JCM 13029 / OCM 148 / SB).